The following is a 249-amino-acid chain: MKILIAEHYEELCKLSAAIIKEQIQAKKDAVLGLATGSTPVGLYKQLISDYQAGEIDFSKVTTFNLDEYAGLSPSHPQSYNHFMHEHLFQHINMQPDHIHIPQGDNPQLEAACKVYEDLIRQAGGIDVQILGIGANGHIGFNEPGSDFEDRTRVVKLSESTIQANARFFGGDPVLVPRLAISMGIKTIMEFSKHIVLLASGEEKADAIQKMAEGPVTTDVPASILQKHNHVTVIADYKAAQKLKSASFS.

The active-site Proton acceptor; for enolization step is the Asp67. Asn136 (for ring-opening step) is an active-site residue. His138 (proton acceptor; for ring-opening step) is an active-site residue. Glu143 acts as the For ring-opening step in catalysis.

This sequence belongs to the glucosamine/galactosamine-6-phosphate isomerase family. NagB subfamily.

It catalyses the reaction alpha-D-glucosamine 6-phosphate + H2O = beta-D-fructose 6-phosphate + NH4(+). Its pathway is amino-sugar metabolism; N-acetylneuraminate degradation; D-fructose 6-phosphate from N-acetylneuraminate: step 5/5. Catalyzes the reversible isomerization-deamination of glucosamine 6-phosphate (GlcN6P) to form fructose 6-phosphate (Fru6P) and ammonium ion. Required for growth on glucosamine and also provides the majority of GlcN6P deaminase activity during growth on N-acetylglucosamine (GlcNAc). The chain is Glucosamine-6-phosphate deaminase 2 from Bacillus subtilis (strain 168).